The following is a 124-amino-acid chain: Small ribosomal subunit protein uS12cz/uS12cy (124 aa).

Belongs to the universal ribosomal protein uS12 family. In terms of assembly, part of the 30S ribosomal subunit.

It localises to the plastid. It is found in the chloroplast. In terms of biological role, with S4 and S5 plays an important role in translational accuracy. Located at the interface of the 30S and 50S subunits. In Zea mays (Maize), this protein is Small ribosomal subunit protein uS12cz/uS12cy (rps12-A).